The chain runs to 345 residues: Phosphoribosylformylglycinamidine cyclo-ligase (345 aa).

The protein belongs to the AIR synthase family.

The protein localises to the cytoplasm. The enzyme catalyses 2-formamido-N(1)-(5-O-phospho-beta-D-ribosyl)acetamidine + ATP = 5-amino-1-(5-phospho-beta-D-ribosyl)imidazole + ADP + phosphate + H(+). The protein operates within purine metabolism; IMP biosynthesis via de novo pathway; 5-amino-1-(5-phospho-D-ribosyl)imidazole from N(2)-formyl-N(1)-(5-phospho-D-ribosyl)glycinamide: step 2/2. This Escherichia fergusonii (strain ATCC 35469 / DSM 13698 / CCUG 18766 / IAM 14443 / JCM 21226 / LMG 7866 / NBRC 102419 / NCTC 12128 / CDC 0568-73) protein is Phosphoribosylformylglycinamidine cyclo-ligase.